A 387-amino-acid chain; its full sequence is 1-deoxy-D-xylulose 5-phosphate reductoisomerase (387 aa).

T10, G11, S12, V13, N38, and N119 together coordinate NADPH. K120 is a binding site for 1-deoxy-D-xylulose 5-phosphate. E121 lines the NADPH pocket. D145 is a binding site for Mn(2+). S146, E147, S170, and H193 together coordinate 1-deoxy-D-xylulose 5-phosphate. E147 lines the Mn(2+) pocket. Position 199 (G199) interacts with NADPH. 1-deoxy-D-xylulose 5-phosphate-binding residues include S206, N211, K212, and E215. Residue E215 participates in Mn(2+) binding.

This sequence belongs to the DXR family. Requires Mg(2+) as cofactor. It depends on Mn(2+) as a cofactor.

The enzyme catalyses 2-C-methyl-D-erythritol 4-phosphate + NADP(+) = 1-deoxy-D-xylulose 5-phosphate + NADPH + H(+). It functions in the pathway isoprenoid biosynthesis; isopentenyl diphosphate biosynthesis via DXP pathway; isopentenyl diphosphate from 1-deoxy-D-xylulose 5-phosphate: step 1/6. Its function is as follows. Catalyzes the NADPH-dependent rearrangement and reduction of 1-deoxy-D-xylulose-5-phosphate (DXP) to 2-C-methyl-D-erythritol 4-phosphate (MEP). This Wolbachia pipientis wMel protein is 1-deoxy-D-xylulose 5-phosphate reductoisomerase.